Reading from the N-terminus, the 155-residue chain is Small ribosomal subunit protein uS7cz/uS7cy (155 aa).

This sequence belongs to the universal ribosomal protein uS7 family. Part of the 30S ribosomal subunit.

The protein resides in the plastid. The protein localises to the chloroplast. Its function is as follows. One of the primary rRNA binding proteins, it binds directly to 16S rRNA where it nucleates assembly of the head domain of the 30S subunit. The sequence is that of Small ribosomal subunit protein uS7cz/uS7cy (rps7-A) from Jasminum nudiflorum (Winter jasmine).